A 141-amino-acid polypeptide reads, in one-letter code: Protein MGF 100-2L (141 aa).

This sequence belongs to the asfivirus MGF 100 family.

In terms of biological role, plays a role in virus cell tropism, and may be required for efficient virus replication in macrophages. This chain is Protein MGF 100-2L, found in African swine fever virus (isolate Pig/Kenya/KEN-50/1950) (ASFV).